Reading from the N-terminus, the 282-residue chain is ATP phosphoribosyltransferase (282 aa).

The protein belongs to the ATP phosphoribosyltransferase family. Long subfamily. Requires Mg(2+) as cofactor.

It localises to the cytoplasm. It catalyses the reaction 1-(5-phospho-beta-D-ribosyl)-ATP + diphosphate = 5-phospho-alpha-D-ribose 1-diphosphate + ATP. It functions in the pathway amino-acid biosynthesis; L-histidine biosynthesis; L-histidine from 5-phospho-alpha-D-ribose 1-diphosphate: step 1/9. Its activity is regulated as follows. Feedback inhibited by histidine. Functionally, catalyzes the condensation of ATP and 5-phosphoribose 1-diphosphate to form N'-(5'-phosphoribosyl)-ATP (PR-ATP). Has a crucial role in the pathway because the rate of histidine biosynthesis seems to be controlled primarily by regulation of HisG enzymatic activity. This Haloarcula marismortui (strain ATCC 43049 / DSM 3752 / JCM 8966 / VKM B-1809) (Halobacterium marismortui) protein is ATP phosphoribosyltransferase.